Reading from the N-terminus, the 390-residue chain is Probable tRNA sulfurtransferase (390 aa).

One can recognise a THUMP domain in the interval Glu-58–Ile-161. ATP is bound by residues Leu-179–Ile-180, His-204–Phe-205, Arg-261, Gly-283, and Gln-292.

This sequence belongs to the ThiI family.

It is found in the cytoplasm. It catalyses the reaction [ThiI sulfur-carrier protein]-S-sulfanyl-L-cysteine + a uridine in tRNA + 2 reduced [2Fe-2S]-[ferredoxin] + ATP + H(+) = [ThiI sulfur-carrier protein]-L-cysteine + a 4-thiouridine in tRNA + 2 oxidized [2Fe-2S]-[ferredoxin] + AMP + diphosphate. The enzyme catalyses [ThiS sulfur-carrier protein]-C-terminal Gly-Gly-AMP + S-sulfanyl-L-cysteinyl-[cysteine desulfurase] + AH2 = [ThiS sulfur-carrier protein]-C-terminal-Gly-aminoethanethioate + L-cysteinyl-[cysteine desulfurase] + A + AMP + 2 H(+). The protein operates within cofactor biosynthesis; thiamine diphosphate biosynthesis. Its function is as follows. Catalyzes the ATP-dependent transfer of a sulfur to tRNA to produce 4-thiouridine in position 8 of tRNAs, which functions as a near-UV photosensor. Also catalyzes the transfer of sulfur to the sulfur carrier protein ThiS, forming ThiS-thiocarboxylate. This is a step in the synthesis of thiazole, in the thiamine biosynthesis pathway. The sulfur is donated as persulfide by IscS. The protein is Probable tRNA sulfurtransferase of Moorella thermoacetica (strain ATCC 39073 / JCM 9320).